Reading from the N-terminus, the 158-residue chain is Glycine/sarcosine/betaine reductase complex component A (158 aa).

The active site involves Sec44. Position 44 (Sec44) is a non-standard amino acid, selenocysteine.

It belongs to the GrdA family. As to quaternary structure, monomer. Component of the glycine, sarcosine and betaine reductase complexes, together with components B and C.

It carries out the reaction acetyl phosphate + [thioredoxin]-disulfide + NH4(+) + H2O = [thioredoxin]-dithiol + glycine + phosphate + H(+). The enzyme catalyses acetyl phosphate + methylamine + [thioredoxin]-disulfide + H2O = sarcosine + [thioredoxin]-dithiol + phosphate + H(+). It catalyses the reaction acetyl phosphate + trimethylamine + [thioredoxin]-disulfide + H2O = glycine betaine + [thioredoxin]-dithiol + phosphate + H(+). Its function is as follows. In the first step of glycine, betaine and sarcosine reductases, the substrate is bound to component PB via a Schiff base intermediate. Then the PB-activated substrate is nucleophilically attacked by the selenol anion of component PA to transform it to a carboxymethylated selenoether and the respective amine. By action of component PC, acetyl phosphate is formed, leaving component PA in its oxidized state. Finally component PA becomes reduced by the thioredoxin system to start a new catalytic cycle of reductive deamination. This chain is Glycine/sarcosine/betaine reductase complex component A (grdA), found in Acetoanaerobium sticklandii (strain ATCC 12662 / DSM 519 / JCM 1433 / CCUG 9281 / NCIMB 10654 / HF) (Clostridium sticklandii).